The sequence spans 400 residues: Lysophospholipid transporter LplT (400 aa).

11 helical membrane passes run 19 to 39, 53 to 73, 91 to 111, 139 to 159, 164 to 184, 227 to 247, 257 to 277, 281 to 301, 304 to 324, 352 to 372, and 373 to 393; these read VIVA…ATLA, VLQM…GQIA, AGAA…LVGI, LMEA…GVLA, IAAL…NLFI, LFWG…PVAL, YLNA…AKLV, TVSR…IFSL, ALLP…FFVV, NSAM…GVPA, and VAIG…LWIW.

This sequence belongs to the major facilitator superfamily. LplT (TC 2.A.1.42) family.

The protein localises to the cell inner membrane. Functionally, catalyzes the facilitated diffusion of 2-acyl-glycero-3-phosphoethanolamine (2-acyl-GPE) into the cell. The sequence is that of Lysophospholipid transporter LplT from Salmonella gallinarum (strain 287/91 / NCTC 13346).